The primary structure comprises 56 residues: Ovomucoid (56 aa).

One can recognise a Kazal-like domain in the interval 6 to 56 (VDCSEYPKPACTMEQRPLCGSDNKTYGNKCNFCNAVVESNGTLTLSHFGKC). 3 cysteine pairs are disulfide-bonded: Cys8/Cys38, Cys16/Cys35, and Cys24/Cys56. Asn45 carries an N-linked (GlcNAc...) asparagine glycan.

The protein resides in the secreted. This Afropavo congensis (Congo peafowl) protein is Ovomucoid.